The chain runs to 253 residues: Ribosomal RNA small subunit methyltransferase G (253 aa).

Residues G84, F89, 135–136, and R154 each bind S-adenosyl-L-methionine; that span reads AE. The interval 228-253 is disordered; the sequence is TPAKYPRREGVPTHQPLFWKAKEQSR.

The protein belongs to the methyltransferase superfamily. RNA methyltransferase RsmG family.

It localises to the cytoplasm. In terms of biological role, specifically methylates the N7 position of a guanine in 16S rRNA. In Deinococcus radiodurans (strain ATCC 13939 / DSM 20539 / JCM 16871 / CCUG 27074 / LMG 4051 / NBRC 15346 / NCIMB 9279 / VKM B-1422 / R1), this protein is Ribosomal RNA small subunit methyltransferase G.